A 435-amino-acid polypeptide reads, in one-letter code: Methylenetetrahydrofolate--tRNA-(uracil-5-)-methyltransferase TrmFO (435 aa).

10-15 is an FAD binding site; it reads GAGLAG.

This sequence belongs to the MnmG family. TrmFO subfamily. Requires FAD as cofactor.

The protein resides in the cytoplasm. The catalysed reaction is uridine(54) in tRNA + (6R)-5,10-methylene-5,6,7,8-tetrahydrofolate + NADH + H(+) = 5-methyluridine(54) in tRNA + (6S)-5,6,7,8-tetrahydrofolate + NAD(+). The enzyme catalyses uridine(54) in tRNA + (6R)-5,10-methylene-5,6,7,8-tetrahydrofolate + NADPH + H(+) = 5-methyluridine(54) in tRNA + (6S)-5,6,7,8-tetrahydrofolate + NADP(+). Catalyzes the folate-dependent formation of 5-methyl-uridine at position 54 (M-5-U54) in all tRNAs. This chain is Methylenetetrahydrofolate--tRNA-(uracil-5-)-methyltransferase TrmFO, found in Halalkalibacterium halodurans (strain ATCC BAA-125 / DSM 18197 / FERM 7344 / JCM 9153 / C-125) (Bacillus halodurans).